The sequence spans 199 residues: Chaperone protein TorD (199 aa).

Belongs to the TorD/DmsD family. TorD subfamily.

It is found in the cytoplasm. Involved in the biogenesis of TorA. Acts on TorA before the insertion of the molybdenum cofactor and, as a result, probably favors a conformation of the apoenzyme that is competent for acquiring the cofactor. This chain is Chaperone protein TorD, found in Escherichia coli O7:K1 (strain IAI39 / ExPEC).